A 372-amino-acid polypeptide reads, in one-letter code: Delta-type opioid receptor (372 aa).

Over 1–47 the chain is Extracellular; it reads MELVPSARAELQSSPLVNLSDAFPSAFPSAGANASGSPGARSASSLA. N-linked (GlcNAc...) asparagine glycosylation is found at N18 and N33. A helical membrane pass occupies residues 48-75; the sequence is LAIAITALYSAVCAVGLLGNVLVMFGIV. The Cytoplasmic segment spans residues 76 to 85; that stretch reads RYTKLKTATN. The chain crosses the membrane as a helical span at residues 86–110; sequence IYIFNLALADALATSTLPFQSAKYL. Residues 111-122 lie on the Extracellular side of the membrane; the sequence is METWPFGELLCK. The cysteines at positions 121 and 198 are disulfide-linked. The helical transmembrane segment at 123-144 threads the bilayer; it reads AVLSIDYYNMFTSIFTLTMMSV. The Cytoplasmic portion of the chain corresponds to 145–163; that stretch reads DRYIAVCHPVKALDFRTPA. Residues 164–186 traverse the membrane as a helical segment; the sequence is KAKLINICIWVLASGVGVPIMVM. Residues 187-206 are Extracellular-facing; the sequence is AVTQPRDGAVVCMLQFPSPS. The chain crosses the membrane as a helical span at residues 207-238; the sequence is WYWDTVTKICVFLFAFVVPILIITVCYGLMLL. At 239-261 the chain is on the cytoplasmic side; that stretch reads RLRSVRLLSGSKEKDRSLRRITR. A helical transmembrane segment spans residues 262–284; sequence MVLVVVGAFVVCWAPIHIFVIVW. Over 285–299 the chain is Extracellular; it reads TLVDINRRDPLVVAA. A helical transmembrane segment spans residues 300–321; it reads LHLCIALGYANSSLNPVLYAFL. The Cytoplasmic portion of the chain corresponds to 322–372; the sequence is DENFKRCFRQLCRTPCGRQEPGSLRRPRQATTRERVTACTPSDGPGGGAAA. A lipid anchor (S-palmitoyl cysteine) is attached at C333. Residues 340 to 372 form a disordered region; it reads QEPGSLRRPRQATTRERVTACTPSDGPGGGAAA.

This sequence belongs to the G-protein coupled receptor 1 family. In terms of assembly, may form homooligomers. Forms a heterodimer with OPRM1. Interacts with GPRASP1. Interacts with RTP4; the interaction promotes cell surface localization of the OPRD1-OPRM1 heterodimer. Ubiquitinated. A basal ubiquitination seems not to be related to degradation. Ubiquitination is increased upon formation of OPRM1:OPRD1 oligomers leading to proteasomal degradation; the ubiquitination is diminished by RTP4. As to expression, brain, with high concentrations in the basal ganglia and limbic regions.

The protein localises to the cell membrane. G-protein coupled receptor that functions as a receptor for endogenous enkephalins and for a subset of other opioids. Ligand binding causes a conformation change that triggers signaling via guanine nucleotide-binding proteins (G proteins) and modulates the activity of down-stream effectors, such as adenylate cyclase. Signaling leads to the inhibition of adenylate cyclase activity. Inhibits neurotransmitter release by reducing calcium ion currents and increasing potassium ion conductance. Plays a role in the perception of pain and in opiate-mediated analgesia. Plays a role in developing analgesic tolerance to morphine. This chain is Delta-type opioid receptor (Oprd1), found in Mus musculus (Mouse).